A 964-amino-acid chain; its full sequence is Coatomer subunit beta (964 aa).

HEAT repeat units lie at residues glutamate 129–tryptophan 166, alanine 238–alanine 275, lysine 314–isoleucine 351, aspartate 393–alanine 430, and serine 466–serine 506. The span at arginine 490–lysine 501 shows a compositional bias: basic and acidic residues. The tract at residues arginine 490–serine 530 is disordered. Residues alanine 512–asparagine 526 are compositionally biased toward low complexity.

Oligomeric complex that consists of at least the alpha, beta, beta', gamma, delta, epsilon and zeta subunits. During oogenesis and spermatogenesis, expressed in ovariole, germarium, testis tip and testis.

Its subcellular location is the cytoplasm. The protein resides in the golgi apparatus membrane. The protein localises to the cytoplasmic vesicle. It is found in the COPI-coated vesicle membrane. Its function is as follows. The coatomer is a cytosolic protein complex that binds to dilysine motifs and reversibly associates with Golgi non-clathrin-coated vesicles, which further mediate biosynthetic protein transport from the ER, via the Golgi up to the trans Golgi network. Coatomer complex is required for budding from Golgi membranes, and is essential for the retrograde Golgi-to-ER transport of dilysine-tagged proteins. Required for limiting lipid storage in lipid droplets. The protein is Coatomer subunit beta of Drosophila melanogaster (Fruit fly).